The sequence spans 173 residues: Alpha-crystallin A chain (173 aa).

At Met-1 the chain carries N-acetylmethionine. The required for complex formation with BFSP1 and BFSP2 stretch occupies residues 1 to 63; sequence MDVTIQHPWF…RTVLDSGISE (63 aa). A Deamidated glutamine; partial modification is found at Gln-6. A Phosphoserine modification is found at Ser-45. Gln-50 carries the deamidated glutamine; partial modification. Residues 52 to 162 enclose the sHSP domain; it reads LFRTVLDSGI…GHSERAIPVS (111 aa). N6-acetyllysine is present on Lys-99. His-100 is a Zn(2+) binding site. A Deamidated asparagine; partial modification is found at Asn-101. Zn(2+)-binding residues include Glu-102 and His-107. Position 122 is a phosphoserine (Ser-122). Asn-123 carries the deamidated asparagine; partial modification. A disulfide bond links Cys-131 and Cys-142. The tract at residues 146–173 is disordered; that stretch reads VQSSMDDGHSERAIPVSREEKPSSVPSS. The residue at position 147 (Gln-147) is a Deamidated glutamine; partial. Positions 151 to 167 are enriched in basic and acidic residues; that stretch reads DDGHSERAIPVSREEKP. His-154 is a Zn(2+) binding site. An O-linked (GlcNAc) serine glycan is attached at Ser-162.

This sequence belongs to the small heat shock protein (HSP20) family. As to quaternary structure, heteromer composed of three CRYAA and one CRYAB subunits. Inter-subunit bridging via zinc ions enhances stability, which is crucial as there is no protein turn over in the lens. Can also form homodimers and homotetramers (dimers of dimers) which serve as the building blocks of homooligomers. Within homooligomers, the zinc-binding motif is created from residues of 3 different molecules. His-100 and Glu-102 from one molecule are ligands of the zinc ion, and His-107 and His-154 residues from additional molecules complete the site with tetrahedral coordination geometry. Part of a complex required for lens intermediate filament formation composed of BFSP1, BFSP2 and CRYAA. In terms of processing, undergoes age-dependent proteolytical cleavage at the C-terminus.

Its subcellular location is the cytoplasm. It is found in the nucleus. Functionally, contributes to the transparency and refractive index of the lens. In its oxidized form (absence of intramolecular disulfide bond), acts as a chaperone, preventing aggregation of various proteins under a wide range of stress conditions. Required for the correct formation of lens intermediate filaments as part of a complex composed of BFSP1, BFSP2 and CRYAA. This chain is Alpha-crystallin A chain (CRYAA), found in Orycteropus afer (Aardvark).